The sequence spans 254 residues: MAVKRRRLLEKLLERRSRGRLHFTLIDPDKTGPGEAGEIAARAAEAGSDAILVGGSIGVTFEETDGVVKAAKRSGLPVILFPGGHTNASRHADAVLFLTVMNSDNPYYIVQAQILGAPLALKLGLEAIPTSYIIVGYGGAAGFVARARPIPYEKPELAALHALAGAMMGGRIIYLEAGSGAPKPVPPEAVAASRKLVDAAGYGGEVLLTVGGGVRTPEAARMLAEAGADVLVTGTLAEESPGKLADVVEAFKSA.

Residues D27 and S56 each contribute to the Mg(2+) site. Residues 174 to 180 (YLEAGSG), 212 to 213 (GG), and 234 to 235 (GT) each bind sn-glycerol 1-phosphate.

It belongs to the GGGP/HepGP synthase family. Group II subfamily. Homohexamer. Mg(2+) serves as cofactor.

The protein resides in the cytoplasm. It carries out the reaction sn-glycerol 1-phosphate + (2E,6E,10E)-geranylgeranyl diphosphate = sn-3-O-(geranylgeranyl)glycerol 1-phosphate + diphosphate. The protein operates within membrane lipid metabolism; glycerophospholipid metabolism. Its function is as follows. Prenyltransferase that catalyzes the transfer of the geranylgeranyl moiety of geranylgeranyl diphosphate (GGPP) to the C3 hydroxyl of sn-glycerol-1-phosphate (G1P). This reaction is the first ether-bond-formation step in the biosynthesis of archaeal membrane lipids. The protein is Geranylgeranylglyceryl phosphate synthase of Aeropyrum pernix (strain ATCC 700893 / DSM 11879 / JCM 9820 / NBRC 100138 / K1).